We begin with the raw amino-acid sequence, 286 residues long: Forkhead box protein E3 (286 aa).

The segment at 1–62 (MDAHVAFSGF…GRRRRRPLQR (62 aa)) is disordered. Residues 64–158 (KPPYSYIALI…DNGSFLRRRK (95 aa)) constitute a DNA-binding region (fork-head).

The protein resides in the nucleus. Its function is as follows. Transcription factor that controls lens epithelial cell growth through regulation of proliferation, apoptosis and cell cycle. During lens development, controls the ratio of the lens fiber cells to the cells of the anterior lens epithelium by regulating the rate of proliferation and differentiation. Controls lens vesicle closure and subsequent separation of the lens vesicle from ectoderm. Controls the expression of DNAJB1 in a pathway that is crucial for the development of the anterior segment of the eye. This is Forkhead box protein E3 (Foxe3) from Rattus norvegicus (Rat).